Consider the following 212-residue polypeptide: Leucine efflux protein (212 aa).

The next 6 membrane-spanning stretches (helical) occupy residues 12–32 (TYLV…LFVL), 49–69 (GVFI…ATLI), 71–91 (TTPI…LYLG), 122–142 (ILSL…VQFI), 153–173 (FFIL…FLII), and 188–208 (LAKV…ARLA).

The protein belongs to the Rht family.

Its subcellular location is the cell inner membrane. It carries out the reaction L-leucine(in) + H(+)(out) = L-leucine(out) + H(+)(in). Functionally, exporter of leucine. The sequence is that of Leucine efflux protein (leuE) from Escherichia coli O157:H7.